The sequence spans 544 residues: uncharacterized protein (544 aa).

An N-terminal signal peptide occupies residues 1–34 (MIARRMLCARPWGPSCVVCALCGALAALVPAVGA). The interval 38–69 (AVPAPGTPAPPAHTASEAVPPAPEPRAEGEQP) is disordered.

This sequence belongs to the TP096X family.

This is an uncharacterized protein from Treponema pallidum (strain Nichols).